Consider the following 443-residue polypeptide: MESLAALYKNHIVTLQERTRDVLARFKLDALLIHSGELFNVFLDDHPYPFKVNPQFKAWVPVTQVPNCWLLVDGVNKPKLWFYLPVDYWHNVEPLPTSFWTEEVEVVALPKADGIGSQLPAARGNIGYIGPVPERALQLDIAASNINPKGVIDYLHYYRAYKTDYELACMREAQKMAVSGHRAAEEAFRSGMSEFDINLAYLTATGHRDTDVPYSNIVALNEHAAVLHYTKLDHQAPSEMRSFLLDAGAEYNGYAADLTRTWSAKSDNDYAHLVKDVNDEQLALIATMKAGVSYVDYHIQFHQRIAKLLRKHQIITDMSEEAMVENDLTGPFMPHGIGHPLGLQVHDVAGFMQDDSGTHLAAPSKYPYLRCTRVLQPRMVLTIEPGIYFIESLLAPWREGPFSKHFNWQKIEALKPFGGIRIEDNVVIHENGVENMTRDLKLA.

Asp-246, Asp-257, His-339, Glu-384, and Glu-423 together coordinate Mn(2+).

The protein belongs to the peptidase M24B family. Bacterial-type prolidase subfamily. It depends on Mn(2+) as a cofactor.

The catalysed reaction is Xaa-L-Pro dipeptide + H2O = an L-alpha-amino acid + L-proline. Functionally, splits dipeptides with a prolyl residue in the C-terminal position. The sequence is that of Xaa-Pro dipeptidase from Salmonella choleraesuis (strain SC-B67).